The sequence spans 353 residues: Farnesyl pyrophosphate synthase (353 aa).

Residues Lys57, Arg60, and Gln96 each contribute to the isopentenyl diphosphate site. Lys57 carries the post-translational modification N6-(2-hydroxyisobutyryl)lysine; alternate. Position 57 is an N6-acetyllysine; alternate (Lys57). The Mg(2+) site is built by Asp103 and Asp107. A dimethylallyl diphosphate-binding site is contributed by Arg112. Arg113 lines the isopentenyl diphosphate pocket. Residues Lys200, Thr201, Gln240, Lys257, and Lys266 each contribute to the dimethylallyl diphosphate site.

The protein belongs to the FPP/GGPP synthase family. In terms of assembly, homodimer. Interacts with RSAD2. Interacts with bovine leukemia virus (BLV) protein G4. The cofactor is Mg(2+).

The protein localises to the cytoplasm. It catalyses the reaction isopentenyl diphosphate + dimethylallyl diphosphate = (2E)-geranyl diphosphate + diphosphate. The enzyme catalyses isopentenyl diphosphate + (2E)-geranyl diphosphate = (2E,6E)-farnesyl diphosphate + diphosphate. It participates in isoprenoid biosynthesis; farnesyl diphosphate biosynthesis; farnesyl diphosphate from geranyl diphosphate and isopentenyl diphosphate: step 1/1. The protein operates within isoprenoid biosynthesis; geranyl diphosphate biosynthesis; geranyl diphosphate from dimethylallyl diphosphate and isopentenyl diphosphate: step 1/1. Inactivated by interferon-induced RSAD2. This inactivation may result of disruption of lipid rafts at the plasma membrane, and thus have an antiviral effect since many enveloped viruses need lipid rafts to bud efficiently out of the cell. Key enzyme in isoprenoid biosynthesis which catalyzes the formation of farnesyl diphosphate (FPP), a precursor for several classes of essential metabolites including sterols, dolichols, carotenoids, and ubiquinones. FPP also serves as substrate for protein farnesylation and geranylgeranylation. Catalyzes the sequential condensation of isopentenyl pyrophosphate with the allylic pyrophosphates, dimethylallyl pyrophosphate, and then with the resultant geranylpyrophosphate to the ultimate product farnesyl pyrophosphate. This is Farnesyl pyrophosphate synthase (FDPS) from Bos taurus (Bovine).